Here is a 141-residue protein sequence, read N- to C-terminus: Cystatin (141 aa).

Positions 1–26 are cleaved as a signal peptide; sequence MVHSQLPVAASLRLLCALLLLPSATM. The 101-residue stretch at 29–129 folds into the Cystatin domain; the sequence is GGLSPRSVTD…CRFQVWSRPW (101 aa). The Secondary area of contact signature appears at 73–77; the sequence is QVVAG. Intrachain disulfides connect C91-C107 and C120-C140.

Belongs to the cystatin family. Expressed by the venom gland at an extremely low level (at protein level).

The protein resides in the secreted. In terms of biological role, inhibits various C1 cysteine proteases including cathepsin L, papain and cathepsin B. This protein has no toxic activity and its function in the venom is unknown. It may play a role as a housekeeping or regulatory protein. The chain is Cystatin from Cryptophis nigrescens (Eastern small-eyed snake).